Consider the following 377-residue polypeptide: Sterol 24-C-methyltransferase erg6 (377 aa).

This sequence belongs to the class I-like SAM-binding methyltransferase superfamily. Erg6/SMT family.

The protein resides in the microsome. It is found in the mitochondrion. It carries out the reaction lanosterol + S-adenosyl-L-methionine = eburicol + S-adenosyl-L-homocysteine + H(+). Its pathway is steroid metabolism; ergosterol biosynthesis. Its activity is regulated as follows. Specific and total activity is decreased in presence of alpha-bisabolol. Functionally, sterol 24-C-methyltransferase; part of the third module of ergosterol biosynthesis pathway that includes the late steps of the pathway. Methylates lanosterol at C-24 to produce eburicol. The third module or late pathway involves the ergosterol synthesis itself through consecutive reactions that mainly occur in the endoplasmic reticulum (ER) membrane. Firstly, the squalene synthase erg9 catalyzes the condensation of 2 farnesyl pyrophosphate moieties to form squalene, which is the precursor of all steroids. Squalene synthase is crucial for balancing the incorporation of farnesyl diphosphate (FPP) into sterol and nonsterol isoprene synthesis. Secondly, squalene is converted into lanosterol by the consecutive action of the squalene epoxidase erg1 and the lanosterol synthase erg7. Then, the delta(24)-sterol C-methyltransferase erg6 methylates lanosterol at C-24 to produce eburicol. Eburicol is the substrate of the sterol 14-alpha demethylase encoded by cyp51A and cyp51B, to yield 4,4,24-trimethyl ergosta-8,14,24(28)-trienol. The C-14 reductase erg24 then reduces the C14=C15 double bond which leads to 4,4-dimethylfecosterol. A sequence of further demethylations at C-4, involving the C-4 demethylation complex containing the C-4 methylsterol oxidases erg25A or erg25B, the sterol-4-alpha-carboxylate 3-dehydrogenase erg26 and the 3-keto-steroid reductase erg27, leads to the production of fecosterol via 4-methylfecosterol. The C-8 sterol isomerase erg2 then catalyzes the reaction which results in unsaturation at C-7 in the B ring of sterols and thus converts fecosterol to episterol. The sterol-C5-desaturase erg3B then catalyzes the introduction of a C-5 double bond in the B ring to produce 5-dehydroepisterol. The 2 other sterol-C5-desaturases, erg3A and erg3C, seem to be less important in ergosterol biosynthesis. The C-22 sterol desaturase erg5 further converts 5-dehydroepisterol into ergosta-5,7,22,24(28)-tetraen-3beta-ol by forming the C-22(23) double bond in the sterol side chain. Finally, ergosta-5,7,22,24(28)-tetraen-3beta-ol is substrate of the C-24(28) sterol reductases erg4A and erg4B to produce ergosterol. Possible alternative sterol biosynthetic pathways might exist from fecosterol to ergosterol, depending on the activities of the erg3 isoforms. The sequence is that of Sterol 24-C-methyltransferase erg6 from Aspergillus fumigatus (strain ATCC MYA-4609 / CBS 101355 / FGSC A1100 / Af293) (Neosartorya fumigata).